Here is a 607-residue protein sequence, read N- to C-terminus: Matrix metalloproteinase-16 (607 aa).

The N-terminal stretch at 1–31 is a signal peptide; the sequence is MILLAFSSGRRLDFVHRSGVFFFQTLLWILC. Positions 32 to 119 are excised as a propeptide; it reads ATVCGTEQYF…SSKFNIRRKR (88 aa). N-linked (GlcNAc...) asparagine glycosylation is present at asparagine 83. The short motif at 99–106 is the Cysteine switch element; the sequence is PRCGVPDQ. A Zn(2+)-binding site is contributed by cysteine 101. Over 120 to 564 the chain is Extracellular; it reads YALTGQKWQH…LDNTASTVKA (445 aa). Aspartate 183 lines the Ca(2+) pocket. The Zn(2+) site is built by histidine 193 and aspartate 195. 4 residues coordinate Ca(2+): aspartate 200, glycine 201, glycine 203, and phenylalanine 205. Histidine 208 contributes to the Zn(2+) binding site. Ca(2+) contacts are provided by glycine 215, glycine 217, and aspartate 219. Histidine 221 lines the Zn(2+) pocket. The Ca(2+) site is built by aspartate 223 and glutamate 226. A Zn(2+)-binding site is contributed by histidine 246. Glutamate 247 is an active-site residue. Histidine 250 and histidine 256 together coordinate Zn(2+). Residues 281–340 form a disordered region; the sequence is DDLQGIQKIYGPPDKIPPPTRPLPTVPPHRSVPPADPRKNDRPKPPRPPTGRPSYPGAKP. Residues 294–315 show a composition bias toward pro residues; sequence DKIPPPTRPLPTVPPHRSVPPA. Hemopexin repeat units lie at residues 340 to 388, 389 to 434, 436 to 484, and 485 to 532; these read PNIC…WRGL, PPSI…GNGI, PHGI…KGIP, and ESPQ…FMGC. Cysteine 343 and cysteine 532 are oxidised to a cystine. The helical transmembrane segment at 565–585 threads the bilayer; sequence IAIVIPCILALCLLVLVYTVF. The Cytoplasmic portion of the chain corresponds to 586–607; the sequence is QFKRKGTPRHILYCKRSMQEWV.

It belongs to the peptidase M10A family. As to quaternary structure, interacts with CSPG4 through CSPG4 chondroitin sulfate glycosaminoglycan. The cofactor is Zn(2+). Requires Ca(2+) as cofactor. In terms of processing, the precursor is cleaved by a furin endopeptidase. As to expression, strongly expressed in the lung, brain and smooth muscle cells. Weakly detectable in the spleen and liver and indetectable in the heart, skeletal muscle and kidney.

It localises to the cell membrane. The protein resides in the secreted. The protein localises to the extracellular space. It is found in the extracellular matrix. In terms of biological role, endopeptidase that degrades various components of the extracellular matrix, such as collagen type III and fibronectin. Activates progelatinase A. Involved in the matrix remodeling of blood vessels. The short isoform efficiently converts progelatinase A to the intermediate form but not to the mature one. It has no effect on type I, II, IV and V collagen. However, upon interaction with CSPG4, it may be involved in degradation and invasion of type I collagen by melanoma cells. This is Matrix metalloproteinase-16 (Mmp16) from Rattus norvegicus (Rat).